The sequence spans 208 residues: ATP-dependent Clp protease proteolytic subunit (208 aa).

S107 functions as the Nucleophile in the catalytic mechanism. H132 is a catalytic residue.

Belongs to the peptidase S14 family. In terms of assembly, fourteen ClpP subunits assemble into 2 heptameric rings which stack back to back to give a disk-like structure with a central cavity, resembling the structure of eukaryotic proteasomes.

The protein resides in the cytoplasm. The enzyme catalyses Hydrolysis of proteins to small peptides in the presence of ATP and magnesium. alpha-casein is the usual test substrate. In the absence of ATP, only oligopeptides shorter than five residues are hydrolyzed (such as succinyl-Leu-Tyr-|-NHMec, and Leu-Tyr-Leu-|-Tyr-Trp, in which cleavage of the -Tyr-|-Leu- and -Tyr-|-Trp bonds also occurs).. Cleaves peptides in various proteins in a process that requires ATP hydrolysis. Has a chymotrypsin-like activity. Plays a major role in the degradation of misfolded proteins. The protein is ATP-dependent Clp protease proteolytic subunit of Methylorubrum populi (strain ATCC BAA-705 / NCIMB 13946 / BJ001) (Methylobacterium populi).